The sequence spans 499 residues: Maturase K (499 aa).

The protein belongs to the intron maturase 2 family. MatK subfamily.

The protein resides in the plastid. It localises to the chloroplast. Its function is as follows. Usually encoded in the trnK tRNA gene intron. Probably assists in splicing its own and other chloroplast group II introns. The protein is Maturase K of Chamaecrista fasciculata (Showy partridge pea).